Reading from the N-terminus, the 598-residue chain is UvrABC system protein C (598 aa).

Positions 14–91 (DSPGCYLHKD…IQKNMPKYNI (78 aa)) constitute a GIY-YIG domain. The region spanning 196–231 (DKIIEDLRSKMLAASKEMAFERAAEYRDLISGIATM) is the UVR domain.

This sequence belongs to the UvrC family. As to quaternary structure, interacts with UvrB in an incision complex.

The protein resides in the cytoplasm. Its function is as follows. The UvrABC repair system catalyzes the recognition and processing of DNA lesions. UvrC both incises the 5' and 3' sides of the lesion. The N-terminal half is responsible for the 3' incision and the C-terminal half is responsible for the 5' incision. The sequence is that of UvrABC system protein C from Streptococcus pyogenes serotype M1.